Reading from the N-terminus, the 317-residue chain is Aspartate carbamoyltransferase catalytic subunit (317 aa).

Carbamoyl phosphate-binding residues include arginine 65 and threonine 66. Lysine 93 lines the L-aspartate pocket. Positions 115, 145, and 148 each coordinate carbamoyl phosphate. 2 residues coordinate L-aspartate: arginine 178 and arginine 233. Positions 274 and 275 each coordinate carbamoyl phosphate.

Belongs to the aspartate/ornithine carbamoyltransferase superfamily. ATCase family. In terms of assembly, heterododecamer (2C3:3R2) of six catalytic PyrB chains organized as two trimers (C3), and six regulatory PyrI chains organized as three dimers (R2).

The catalysed reaction is carbamoyl phosphate + L-aspartate = N-carbamoyl-L-aspartate + phosphate + H(+). Its pathway is pyrimidine metabolism; UMP biosynthesis via de novo pathway; (S)-dihydroorotate from bicarbonate: step 2/3. Catalyzes the condensation of carbamoyl phosphate and aspartate to form carbamoyl aspartate and inorganic phosphate, the committed step in the de novo pyrimidine nucleotide biosynthesis pathway. This chain is Aspartate carbamoyltransferase catalytic subunit, found in Bordetella bronchiseptica (strain ATCC BAA-588 / NCTC 13252 / RB50) (Alcaligenes bronchisepticus).